The sequence spans 198 residues: A-type ATP synthase subunit E (198 aa).

Belongs to the V-ATPase E subunit family. As to quaternary structure, has multiple subunits with at least A(3), B(3), C, D, E, F, H, I and proteolipid K(x).

The protein resides in the cell membrane. Component of the A-type ATP synthase that produces ATP from ADP in the presence of a proton gradient across the membrane. The chain is A-type ATP synthase subunit E from Pyrococcus horikoshii (strain ATCC 700860 / DSM 12428 / JCM 9974 / NBRC 100139 / OT-3).